We begin with the raw amino-acid sequence, 175 residues long: Cuticle protein 16.5, isoform B (175 aa).

19 consecutive repeat copies span residues 17–20, 25–28, 31–34, 38–41, 44–47, 51–54, 57–60, 64–67, 70–73, 77–80, 83–86, 91–94, 99–102, 106–109, 134–137, 144–147, 151–154, 158–161, and 165–168.

Its function is as follows. Component of the cuticle of migratory locust which contains more than 100 different structural proteins. This chain is Cuticle protein 16.5, isoform B, found in Locusta migratoria (Migratory locust).